A 53-amino-acid polypeptide reads, in one-letter code: Metallothionein (53 aa).

A propeptide spanning residues 1-6 is cleaved from the precursor; that stretch reads MRVIRM. C17, H19, C22, C24, C32, H33, C34, C43, and C45 together coordinate Cu(+).

This sequence belongs to the metallothionein superfamily.

Functionally, metallothioneins are small proteins that have a high content of cysteine residues which allow them to bind heavy metal ions through clusters of thiolate bonds. MymT binds up to seven ions of Cu(+), with a preference for four to six Cu(+) ions, in a solvent-shielded core. MymT protects M.tuberculosis from copper toxicity. The chain is Metallothionein (mymT) from Mycobacterium tuberculosis (strain CDC 1551 / Oshkosh).